The primary structure comprises 184 residues: ATP synthase subunit b, chloroplastic (184 aa).

A helical membrane pass occupies residues 27 to 49 (LATNPINLSVVFGVLIFFGKGVL).

Belongs to the ATPase B chain family. In terms of assembly, F-type ATPases have 2 components, F(1) - the catalytic core - and F(0) - the membrane proton channel. F(1) has five subunits: alpha(3), beta(3), gamma(1), delta(1), epsilon(1). F(0) has four main subunits: a(1), b(1), b'(1) and c(10-14). The alpha and beta chains form an alternating ring which encloses part of the gamma chain. F(1) is attached to F(0) by a central stalk formed by the gamma and epsilon chains, while a peripheral stalk is formed by the delta, b and b' chains.

The protein localises to the plastid. The protein resides in the chloroplast thylakoid membrane. F(1)F(0) ATP synthase produces ATP from ADP in the presence of a proton or sodium gradient. F-type ATPases consist of two structural domains, F(1) containing the extramembraneous catalytic core and F(0) containing the membrane proton channel, linked together by a central stalk and a peripheral stalk. During catalysis, ATP synthesis in the catalytic domain of F(1) is coupled via a rotary mechanism of the central stalk subunits to proton translocation. Functionally, component of the F(0) channel, it forms part of the peripheral stalk, linking F(1) to F(0). This chain is ATP synthase subunit b, chloroplastic, found in Barbarea verna (Land cress).